The following is a 188-amino-acid chain: Surfactant protein C (188 aa).

The propeptide occupies 1–23 (MDMGSKEALMESPPDYSAAPRGR). S-palmitoyl cysteine attachment occurs at residues Cys28 and Cys29. Residues 59–188 (HMSQKHTEMV…LCGEVPLIYI (130 aa)) constitute a propeptide that is removed on maturation. The BRICHOS domain maps to 94 to 188 (FPIGSTGIVT…LCGEVPLIYI (95 aa)). A disulfide bridge connects residues Cys121 and Cys180. The interval 144–164 (NPAEPPTQRGQDKGPAAGPAS) is disordered.

The protein resides in the secreted. Its subcellular location is the extracellular space. The protein localises to the surface film. Its function is as follows. Pulmonary surfactant associated proteins promote alveolar stability by lowering the surface tension at the air-liquid interface in the peripheral air spaces. The chain is Surfactant protein C (SFTPC) from Oryctolagus cuniculus (Rabbit).